We begin with the raw amino-acid sequence, 302 residues long: Sulfate adenylyltransferase subunit 2 (302 aa).

Belongs to the PAPS reductase family. CysD subfamily. Heterodimer composed of CysD, the smaller subunit, and CysN.

It catalyses the reaction sulfate + ATP + H(+) = adenosine 5'-phosphosulfate + diphosphate. The protein operates within sulfur metabolism; hydrogen sulfide biosynthesis; sulfite from sulfate: step 1/3. Its function is as follows. With CysN forms the ATP sulfurylase (ATPS) that catalyzes the adenylation of sulfate producing adenosine 5'-phosphosulfate (APS) and diphosphate, the first enzymatic step in sulfur assimilation pathway. APS synthesis involves the formation of a high-energy phosphoric-sulfuric acid anhydride bond driven by GTP hydrolysis by CysN coupled to ATP hydrolysis by CysD. The chain is Sulfate adenylyltransferase subunit 2 from Photorhabdus laumondii subsp. laumondii (strain DSM 15139 / CIP 105565 / TT01) (Photorhabdus luminescens subsp. laumondii).